The sequence spans 868 residues: DNA topoisomerase 1 (868 aa).

A Toprim domain is found at 3–148; sequence KSLVIVESPA…RFSRVVFNEI (146 aa). Residues E9 and D117 each coordinate Mg(2+). Residues 164 to 581 form the Topo IA-type catalytic domain; the sequence is NMDRVNAQQT…QFFKDFSSQL (418 aa). Residues 198–203 are interaction with DNA; it reads SAGRVQ. Y325 serves as the catalytic O-(5'-phospho-DNA)-tyrosine intermediate. C4-type zinc fingers lie at residues 605–636, 667–694, and 716–739; these read CPTCGRNMAIRTASTGVFLGCTGYALPPKERC, CTKCGTAMDSYVIDAHRKIHICGNNPNC, and CDKCGADMHLKLGRFGKYMGCTNC.

The protein belongs to the type IA topoisomerase family. In terms of assembly, monomer. Mg(2+) serves as cofactor.

The enzyme catalyses ATP-independent breakage of single-stranded DNA, followed by passage and rejoining.. In terms of biological role, releases the supercoiling and torsional tension of DNA, which is introduced during the DNA replication and transcription, by transiently cleaving and rejoining one strand of the DNA duplex. Introduces a single-strand break via transesterification at a target site in duplex DNA. The scissile phosphodiester is attacked by the catalytic tyrosine of the enzyme, resulting in the formation of a DNA-(5'-phosphotyrosyl)-enzyme intermediate and the expulsion of a 3'-OH DNA strand. The free DNA strand then undergoes passage around the unbroken strand, thus removing DNA supercoils. Finally, in the religation step, the DNA 3'-OH attacks the covalent intermediate to expel the active-site tyrosine and restore the DNA phosphodiester backbone. The protein is DNA topoisomerase 1 of Haemophilus influenzae (strain ATCC 51907 / DSM 11121 / KW20 / Rd).